A 429-amino-acid polypeptide reads, in one-letter code: D-amino acid dehydrogenase (429 aa).

An FAD-binding site is contributed by 3 to 17 (VLILGSGVIGTTTAW).

The protein belongs to the DadA oxidoreductase family. It depends on FAD as a cofactor.

The catalysed reaction is a D-alpha-amino acid + A + H2O = a 2-oxocarboxylate + AH2 + NH4(+). The protein operates within amino-acid degradation; D-alanine degradation; NH(3) and pyruvate from D-alanine: step 1/1. Its function is as follows. Oxidative deamination of D-amino acids. This Xanthomonas campestris pv. campestris (strain 8004) protein is D-amino acid dehydrogenase.